We begin with the raw amino-acid sequence, 442 residues long: MIKAIKGFNDILPAQSAKWLYLESILADVLGRYGYEHIRLPIVEQTDLFARAIGGATDIVEKEMYSFTDKSDPPTPLTLRPEGTAGAVRAVNEHNLLRGDTPKLWYIGPMFRYERPQKGRYRQFHQLGVESFGSALPDADAELIAMTHLMWQELGLKDEMRLQLNSLGERDERHAYREALVTYLTDKQEQLDEDSKRRLTTNPLRILDSKEASTQALLIDAPKLANFLGEESVAHFEQVQTYLTELGIDFEINPHLVRGLDYYNKTVFEWVTDKLGSQATVCAGGRYDGLVGQLKSIDTRDAKADAKADAKADSKPVKSEPAVGFAMGLERLLLLIDAVAPIADIPACDVFVVAHPEVYSAGIGYAQNLRYSRPDLRVKMASATSLKAQMKKADKSGAALTVIIAQQEIDDKTISIKDMQTGEQKTAAQDWLSDKDNFCRRK.

This sequence belongs to the class-II aminoacyl-tRNA synthetase family. As to quaternary structure, homodimer.

The protein resides in the cytoplasm. It catalyses the reaction tRNA(His) + L-histidine + ATP = L-histidyl-tRNA(His) + AMP + diphosphate + H(+). The polypeptide is Histidine--tRNA ligase (Psychrobacter arcticus (strain DSM 17307 / VKM B-2377 / 273-4)).